Reading from the N-terminus, the 306-residue chain is Ribonuclease Z (306 aa).

Zn(2+) is bound by residues His-63, His-65, Asp-67, His-68, His-141, Asp-211, and His-269. Asp-67 functions as the Proton acceptor in the catalytic mechanism.

The protein belongs to the RNase Z family. Homodimer. Requires Zn(2+) as cofactor.

The enzyme catalyses Endonucleolytic cleavage of RNA, removing extra 3' nucleotides from tRNA precursor, generating 3' termini of tRNAs. A 3'-hydroxy group is left at the tRNA terminus and a 5'-phosphoryl group is left at the trailer molecule.. Its function is as follows. Zinc phosphodiesterase, which displays some tRNA 3'-processing endonuclease activity. Probably involved in tRNA maturation, by removing a 3'-trailer from precursor tRNA. The sequence is that of Ribonuclease Z from Macrococcus caseolyticus (strain JCSC5402) (Macrococcoides caseolyticum).